A 66-amino-acid polypeptide reads, in one-letter code: Large ribosomal subunit protein bL35 (66 aa).

The span at 1-15 (MSKMKTKSGAKKRFK) shows a compositional bias: basic residues. The segment at 1–35 (MSKMKTKSGAKKRFKLTASGKVKAGQAGKRHGMIK) is disordered.

Belongs to the bacterial ribosomal protein bL35 family.

The polypeptide is Large ribosomal subunit protein bL35 (Maricaulis maris (strain MCS10) (Caulobacter maris)).